Here is a 72-residue protein sequence, read N- to C-terminus: Translation initiation factor IF-1 (72 aa).

The S1-like domain occupies 1 to 72 (MAKEDMIEVE…TRGRITYRFK (72 aa)).

Belongs to the IF-1 family. In terms of assembly, component of the 30S ribosomal translation pre-initiation complex which assembles on the 30S ribosome in the order IF-2 and IF-3, IF-1 and N-formylmethionyl-tRNA(fMet); mRNA recruitment can occur at any time during PIC assembly.

The protein localises to the cytoplasm. One of the essential components for the initiation of protein synthesis. Stabilizes the binding of IF-2 and IF-3 on the 30S subunit to which N-formylmethionyl-tRNA(fMet) subsequently binds. Helps modulate mRNA selection, yielding the 30S pre-initiation complex (PIC). Upon addition of the 50S ribosomal subunit IF-1, IF-2 and IF-3 are released leaving the mature 70S translation initiation complex. This chain is Translation initiation factor IF-1, found in Enterococcus faecalis (strain ATCC 700802 / V583).